We begin with the raw amino-acid sequence, 152 residues long: MTKERTFIAIKPDGVQRGYVAEIIGRFEKKGFKLVGLKQLIPSKDLAQNHYGVHRERPFFGDLVDFISSGPVVAMVWEGEGVILSARKLIGATKPLEAEPGTIRGDLAIDIGRNIIHGSDGEDTAKFEIDLWFNEEELCEWETSDAKWRSEN.

Lysine 11, phenylalanine 59, arginine 87, threonine 93, arginine 104, and asparagine 114 together coordinate ATP. Residue histidine 117 is the Pros-phosphohistidine intermediate of the active site.

Belongs to the NDK family. Homotetramer. It depends on Mg(2+) as a cofactor.

It localises to the cytoplasm. It carries out the reaction a 2'-deoxyribonucleoside 5'-diphosphate + ATP = a 2'-deoxyribonucleoside 5'-triphosphate + ADP. It catalyses the reaction a ribonucleoside 5'-diphosphate + ATP = a ribonucleoside 5'-triphosphate + ADP. Functionally, major role in the synthesis of nucleoside triphosphates other than ATP. The ATP gamma phosphate is transferred to the NDP beta phosphate via a ping-pong mechanism, using a phosphorylated active-site intermediate. The protein is Nucleoside diphosphate kinase of Prochlorococcus marinus (strain MIT 9215).